Reading from the N-terminus, the 114-residue chain is Large ribosomal subunit protein uL22 (114 aa).

This sequence belongs to the universal ribosomal protein uL22 family. In terms of assembly, part of the 50S ribosomal subunit.

In terms of biological role, this protein binds specifically to 23S rRNA; its binding is stimulated by other ribosomal proteins, e.g. L4, L17, and L20. It is important during the early stages of 50S assembly. It makes multiple contacts with different domains of the 23S rRNA in the assembled 50S subunit and ribosome. Its function is as follows. The globular domain of the protein is located near the polypeptide exit tunnel on the outside of the subunit, while an extended beta-hairpin is found that lines the wall of the exit tunnel in the center of the 70S ribosome. This Streptococcus pyogenes serotype M6 (strain ATCC BAA-946 / MGAS10394) protein is Large ribosomal subunit protein uL22.